Reading from the N-terminus, the 220-residue chain is DNA replication complex GINS protein SLD5 (220 aa).

It belongs to the GINS4/SLD5 family. Component of the GINS complex. Interacts with EOL1 in the nucleus.

It is found in the nucleus. Its function is as follows. The GINS complex plays an essential role in the initiation of DNA replication. Required during embryogenesis. This chain is DNA replication complex GINS protein SLD5, found in Arabidopsis thaliana (Mouse-ear cress).